The chain runs to 589 residues: MRPLPGALGVAAAAALWLLLLLLPRTRADEHEHTYQDKEEVVLWMNTVGPYHNRQETYKYFSLPFCVGSKKSISHYHETLGEALQGVELEFSGLDIKFKDDVMPATYCEIDLDKEKRDAFVYAIKNHYWYQMYIDDLPIWGIVGEADENGEDYYLWTYKKLEIGFNGNRIVDVNLTSEGKVKLVPNTKIQMSYSVKWKKSDVKFEDRFDKYLDPSFFQHRIHWFSIFNSFMMVIFLVGLVSMILMRTLRKDYARYSKEEEMDDMDRDLGDEYGWKQVHGDVFRPSSHPLIFSSLIGSGCQIFAVSLIVIIVAMIEDLYTERGSMLSTAIFVYAATSPVNGYFGGSLYARQGGRRWIKQMFIGAFLIPAMVCGTAFFINFIAIYYHASRAIPFGTMVAVCCICFFVILPLNLVGTILGRNLSGQPNFPCRVNAVPRPIPEKKWFMEPAVIVCLGGILPFGSIFIEMYFIFTSFWAYKIYYVYGFMMLVLVILCIVTVCVTIVCTYFLLNAEDYRWQWTSFLSAASTAIYVYMYSFYYYFFKTKMYGLFQTSFYFGYMAVFSTALGIMCGAIGYMGTSAFVRKIYTNVKID.

The N-terminal stretch at 1-28 (MRPLPGALGVAAAAALWLLLLLLPRTRA) is a signal peptide. Asn-174 carries an N-linked (GlcNAc...) asparagine glycan. A run of 5 helical transmembrane segments spans residues 224 to 244 (FSIF…SMIL), 294 to 314 (LIGS…VAMI), 328 to 348 (AIFV…SLYA), 360 to 380 (FIGA…INFI), and 389 to 409 (AIPF…ILPL). Residue Asn-419 is glycosylated (N-linked (GlcNAc...) asparagine). 4 consecutive transmembrane segments (helical) span residues 449 to 469 (IVCL…YFIF), 482 to 502 (GFMM…TIVC), 519 to 539 (FLSA…YYFF), and 551 to 571 (FYFG…GAIG).

Belongs to the nonaspanin (TM9SF) (TC 9.A.2) family.

Its subcellular location is the membrane. In Homo sapiens (Human), this protein is Transmembrane 9 superfamily member 3 (TM9SF3).